The chain runs to 224 residues: MSDNAQLTGLCDRFRGFYPVVIDVETAGFNAKTDALLEIAAITLKMDEQGWLTPDTTLHFHVDPFEGANLQPEALAFNGIDPHNPLRGAVSEYDALHAIYKMVRKGMKDSNCNRAIMVAHNATFDHSFMMAASERASLKRNPFHPFVTFDTAALSGLALGQTVLSKACITAGIDFDGNQAHSALYDTERTAELFCEIVNRWKRLGGWPLPMAESDSDSDSDSEE.

The 175-residue stretch at 20–194 folds into the Exonuclease domain; that stretch reads VVIDVETAGF…YDTERTAELF (175 aa). Mg(2+) contacts are provided by Asp23, Glu25, His181, and Asp186. The active-site Proton donor/acceptor is the His181.

The protein belongs to the RNase T family. As to quaternary structure, homodimer. The cofactor is Mg(2+).

In terms of biological role, trims short 3' overhangs of a variety of RNA species, leaving a one or two nucleotide 3' overhang. Responsible for the end-turnover of tRNA: specifically removes the terminal AMP residue from uncharged tRNA (tRNA-C-C-A). Also appears to be involved in tRNA biosynthesis. This chain is Ribonuclease T, found in Enterobacter sp. (strain 638).